The following is a 324-amino-acid chain: Signal peptidase I (324 aa).

At Met1 the chain carries Blocked amino end (Met). The Periplasmic segment spans residues 1 to 3 (MAN). A helical transmembrane segment spans residues 4–22 (MFALILVIATLVTGILWCV). Topologically, residues 23 to 58 (DKFFFAPKRRERQAAAQAAAGDSLDKATLKKVAPKP) are cytoplasmic. Residues 59 to 77 (GWLETGASVFPVLAIVLIV) form a helical membrane-spanning segment. The Periplasmic segment spans residues 78 to 324 (RSFIYEPFQI…LRLSRIGGIH (247 aa)). Residues Ser91 and Lys146 contribute to the active site. Cys171 and Cys177 are disulfide-bonded.

Belongs to the peptidase S26 family.

The protein resides in the cell inner membrane. It catalyses the reaction Cleavage of hydrophobic, N-terminal signal or leader sequences from secreted and periplasmic proteins.. This chain is Signal peptidase I (lepB), found in Escherichia coli (strain K12).